Consider the following 522-residue polypeptide: Signal transduction histidine-protein kinase/phosphatase MprB (522 aa).

The Cytoplasmic segment spans residues 1 to 30 (MIRLYRPQRPPLRAPLRATPSLSLRWRVML). The helical transmembrane segment at 31–51 (LAMSMVAMVVVLMAFAVYAVI) threads the bilayer. Over 52–167 (SAALYSDIDN…PTEAVMNKLR (116 aa)) the chain is Extracellular. Residues 168–188 (WVLLIVGGVGVAVAAVAGGMV) form a helical membrane-spanning segment. Topologically, residues 189-522 (TRAGLRPVAR…SVDSQSARAR (334 aa)) are cytoplasmic. Residues 190–242 (RAGLRPVARLTEAAERVARTDDLRPIPVFGSDELARLTESFNLMLRALAESRE) enclose the HAMP domain. In terms of domain architecture, Histidine kinase spans 250 to 470 (DAGHELRTPL…SFYVLLPGRS (221 aa)). His253 carries the phosphohistidine; by autocatalysis modification. The disordered stretch occupies residues 467–522 (PGRSLPPAGHSTPAGESETDQAEAATDPAVPVAGDTANSRESANVISVDSQSARAR). Positions 502–522 (TANSRESANVISVDSQSARAR) are enriched in polar residues.

The cofactor is Mg(2+). It depends on Mn(2+) as a cofactor. Autophosphorylated.

It is found in the cell membrane. The catalysed reaction is ATP + protein L-histidine = ADP + protein N-phospho-L-histidine.. Functionally, member of the two-component regulatory system MprB/MprA which contributes to maintaining a balance among several systems involved in stress resistance and is required for establishment and maintenance of persistent infection in the host. In response to environmental signals MprB acts both as a membrane-associated protein kinase that undergoes autophosphorylation and subsequently transfers the phosphate to MprA, and a protein phosphatase that dephosphorylates phospho-MprA. This chain is Signal transduction histidine-protein kinase/phosphatase MprB (mprB), found in Mycolicibacterium paratuberculosis (strain ATCC BAA-968 / K-10) (Mycobacterium paratuberculosis).